Reading from the N-terminus, the 51-residue chain is Cuticle protein CP575 (51 aa).

Positions 1–51 constitute a Chitin-binding type R&amp;R domain; sequence GDIIDVDNDLFEHEQDGVAGTSVHGEYEAYDAYGNEYEVKYIADHLGFRVL.

As to expression, calcified shell.

The protein is Cuticle protein CP575 of Cancer pagurus (Rock crab).